The following is a 591-amino-acid chain: Fanconi anemia group C protein homolog (591 aa).

As to quaternary structure, belongs to the multisubunit FA complex composed of FANCA, FANCB, FANCC, FANCE, FANCF, FANCG, FANCL/PHF9 and FANCM. This complex may also include HSP70. Interacts with ZBTB32. Upon IFNG induction, interacts with STAT1. Interacts with CDK1. Interacts with EIF2AK2. As to expression, ubiquitous.

Its subcellular location is the nucleus. The protein localises to the cytoplasm. Its function is as follows. DNA repair protein that may operate in a postreplication repair or a cell cycle checkpoint function. May be implicated in interstrand DNA cross-link repair and in the maintenance of normal chromosome stability. Upon IFNG induction, may facilitate STAT1 activation by recruiting STAT1 to IFNGR1. This Mus musculus (Mouse) protein is Fanconi anemia group C protein homolog (Fancc).